Reading from the N-terminus, the 27-residue chain is Protein YqiM (27 aa).

The protein is Protein YqiM of Escherichia coli (strain K12).